A 400-amino-acid chain; its full sequence is MSKEKIALAYSGGLDTSVMIKWLKDKYDAEIVAVTGNLGQQKEIENLESKAYSTGASAFRFVDLRKTFVEEYIWRALKAGALYEDVYPLATALGRPLLAKALVDVALEENCTMLAHGCTGKGNDQVRFEVTFASLAPHLKILAPLREWEFTSREAEIAYALEHNIPVSATKKSPYSIDENIWGISIECGVLEDPMVTPPEDAYQITTSPENAPDTPASVEIEFVKGIPVALDGERMSGLDMIQKLNDIGAANGIGRLDMIENRVVGIKSREIYEAPAATILHFAHRELERLTLEKTVFQYKKNISQDYANIIYNGTWFSPMRKALDAFVDETQKPVTGLVRLKLYKGGISLLGRNSPNSLYNEELATYTEADTFNHKAAAGFIHLYGLGMKTFSQVNPGL.

9-17 (AYSGGLDTS) contributes to the ATP binding site. Tyr87 is an L-citrulline binding site. Residue Gly117 coordinates ATP. The L-aspartate site is built by Thr119, Asn123, and Asp124. Position 123 (Asn123) interacts with L-citrulline. L-citrulline contacts are provided by Arg127, Ser176, Ser185, Glu261, and Tyr273.

Belongs to the argininosuccinate synthase family. Type 1 subfamily. Homotetramer.

It is found in the cytoplasm. It carries out the reaction L-citrulline + L-aspartate + ATP = 2-(N(omega)-L-arginino)succinate + AMP + diphosphate + H(+). It participates in amino-acid biosynthesis; L-arginine biosynthesis; L-arginine from L-ornithine and carbamoyl phosphate: step 2/3. This Chlorobium limicola (strain DSM 245 / NBRC 103803 / 6330) protein is Argininosuccinate synthase.